A 264-amino-acid polypeptide reads, in one-letter code: Thiazole synthase (264 aa).

K106 serves as the catalytic Schiff-base intermediate with DXP. 1-deoxy-D-xylulose 5-phosphate contacts are provided by residues G167, 193–194, and 215–216; these read AG and NT.

The protein belongs to the ThiG family. Homotetramer. Forms heterodimers with either ThiH or ThiS.

It is found in the cytoplasm. The catalysed reaction is [ThiS sulfur-carrier protein]-C-terminal-Gly-aminoethanethioate + 2-iminoacetate + 1-deoxy-D-xylulose 5-phosphate = [ThiS sulfur-carrier protein]-C-terminal Gly-Gly + 2-[(2R,5Z)-2-carboxy-4-methylthiazol-5(2H)-ylidene]ethyl phosphate + 2 H2O + H(+). It functions in the pathway cofactor biosynthesis; thiamine diphosphate biosynthesis. Its function is as follows. Catalyzes the rearrangement of 1-deoxy-D-xylulose 5-phosphate (DXP) to produce the thiazole phosphate moiety of thiamine. Sulfur is provided by the thiocarboxylate moiety of the carrier protein ThiS. In vitro, sulfur can be provided by H(2)S. The polypeptide is Thiazole synthase (Thioalkalivibrio sulfidiphilus (strain HL-EbGR7)).